The following is a 207-amino-acid chain: Casparian strip membrane protein 1 (207 aa).

Residue alanine 2 is modified to N-acetylalanine. The Cytoplasmic portion of the chain corresponds to 2–44 (AKESTTIDVGEPNTMTKSTSHVVVDEKKKKGFVAAAAGGGYKR). A helical transmembrane segment spans residues 45–65 (GLAVFDFLLRLAAIGITIGAS). Residues 66 to 95 (SVMFTAEETLPFFTQFLQFQAGYDDFPTFQ) lie on the Extracellular side of the membrane. The helical transmembrane segment at 96 to 116 (FFVIAIAIVASYLVLSLPFSI) threads the bilayer. Residues 117–128 (VTIVRPLAVAPR) lie on the Cytoplasmic side of the membrane. Residues 129 to 149 (LILLISDTVVLTLTTAAAAAA) traverse the membrane as a helical segment. Residues 150-181 (ASIVYLAHNGNTNTNWLPICQQFGDFCQTAST) lie on the Extracellular side of the membrane. A helical transmembrane segment spans residues 182–202 (AVVAASISVAFFVLLIVISAI). At 203–207 (ALKRH) the chain is on the cytoplasmic side.

Belongs to the Casparian strip membrane proteins (CASP) family. Homodimer and heterodimers.

It localises to the cell membrane. Regulates membrane-cell wall junctions and localized cell wall deposition. Required for establishment of the Casparian strip membrane domain (CSD) and the subsequent formation of Casparian strips, a cell wall modification of the root endodermis that determines an apoplastic barrier between the intraorganismal apoplasm and the extraorganismal apoplasm and prevents lateral diffusion. This is Casparian strip membrane protein 1 from Raphanus raphanistrum (Wild radish).